Consider the following 399-residue polypeptide: Protein shisa-8 (399 aa).

The first 36 residues, 1 to 36, serve as a signal peptide directing secretion; that stretch reads MERAGARGQRCGRRSHGLPLALRLALLLAGSPSGRA. At 37–136 the chain is on the extracellular side; that stretch reads GAPEEQEIAG…APRDPARERS (100 aa). An N-linked (GlcNAc...) asparagine glycan is attached at Asn73. A helical transmembrane segment spans residues 137 to 157; it reads HTAVYAVCGVAALLVLVGIGA. Residues 158–399 lie on the Cytoplasmic side of the membrane; the sequence is RLGLERAHSP…STNSKAEVTV (242 aa). 2 disordered regions span residues 207–248 and 378–399; these read GDGV…GGSL and FYSS…EVTV. Polar residues predominate over residues 389-399; the sequence is LSTNSKAEVTV.

The protein belongs to the shisa family. Interacts with AMPAR subunits GRIA1 and GRIA2. In terms of tissue distribution, brain-specific. Highly expressed in cerebellum and olfactory bulb.

It localises to the membrane. Functionally, may regulate trafficking and current kinetics of AMPA-type glutamate receptor (AMPAR) at synapses. The polypeptide is Protein shisa-8 (Mus musculus (Mouse)).